The sequence spans 473 residues: MGRTLYDKIFDEHVVHTEEDGTAVLYIDRHLVHEVTSPQAFEGLREAGRKVWRVSSIVATADHNTPTTGWERGYDGIADPISKEQIVTLDKNIQESGAAAFFPFLSKRQGIVHVIGPENGATLPGMTVVCGDSHTSTHGAFGALAHGIGTSEVEHVMATQTLLAKKAKNMLVKVNGKVAPGITAKDIVLAIIGKIGTAGGTGYTIEFAGEAIRDLSMEGRMTVCNMAIEAGARAGLVAVDDKTINYVKGRPLAPTGVEWDQAVAYWKTLHSDADAKFDAVVELNAAEIVPQVTWGTSPEMVLGIDAVVPDPDKEKDPSKRGAIERALTYMGLQPGKPMDDIFVDKVFIGSCTNSRIEDMREAAAVVKKLGQKVAKNIKLAMVVPGSGLVKEQAEREGLDAIFKAAGFEWREPGCSMCLAMNADRLEPGERCASTSNRNFEGRQGAGGRTHLVSPAMAAAAAIHGHFVDIRQFA.

[4Fe-4S] cluster is bound by residues Cys-351, Cys-414, and Cys-417.

This sequence belongs to the aconitase/IPM isomerase family. LeuC type 1 subfamily. As to quaternary structure, heterodimer of LeuC and LeuD. The cofactor is [4Fe-4S] cluster.

The catalysed reaction is (2R,3S)-3-isopropylmalate = (2S)-2-isopropylmalate. It functions in the pathway amino-acid biosynthesis; L-leucine biosynthesis; L-leucine from 3-methyl-2-oxobutanoate: step 2/4. Its function is as follows. Catalyzes the isomerization between 2-isopropylmalate and 3-isopropylmalate, via the formation of 2-isopropylmaleate. The sequence is that of 3-isopropylmalate dehydratase large subunit from Acidovorax sp. (strain JS42).